Consider the following 124-residue polypeptide: Small ribosomal subunit protein uS12 (124 aa).

3-methylthioaspartic acid is present on D89.

This sequence belongs to the universal ribosomal protein uS12 family. Part of the 30S ribosomal subunit. Contacts proteins S8 and S17. May interact with IF1 in the 30S initiation complex.

In terms of biological role, with S4 and S5 plays an important role in translational accuracy. Functionally, interacts with and stabilizes bases of the 16S rRNA that are involved in tRNA selection in the A site and with the mRNA backbone. Located at the interface of the 30S and 50S subunits, it traverses the body of the 30S subunit contacting proteins on the other side and probably holding the rRNA structure together. The combined cluster of proteins S8, S12 and S17 appears to hold together the shoulder and platform of the 30S subunit. This is Small ribosomal subunit protein uS12 from Arthrobacter sp. (strain FB24).